We begin with the raw amino-acid sequence, 102 residues long: Large ribosomal subunit protein bL21 (102 aa).

The span at R79–P91 shows a compositional bias: basic residues. The disordered stretch occupies residues R79–A102.

Belongs to the bacterial ribosomal protein bL21 family. As to quaternary structure, part of the 50S ribosomal subunit. Contacts protein L20.

Its function is as follows. This protein binds to 23S rRNA in the presence of protein L20. This chain is Large ribosomal subunit protein bL21, found in Staphylococcus carnosus (strain TM300).